Reading from the N-terminus, the 150-residue chain is Large ribosomal subunit protein uL11 (150 aa).

Belongs to the universal ribosomal protein uL11 family. As to quaternary structure, part of the ribosomal stalk of the 50S ribosomal subunit. Interacts with L10 and the large rRNA to form the base of the stalk. L10 forms an elongated spine to which L12 dimers bind in a sequential fashion forming a multimeric L10(L12)X complex. In terms of processing, one or more lysine residues are methylated.

Forms part of the ribosomal stalk which helps the ribosome interact with GTP-bound translation factors. In Cereibacter sphaeroides (strain KD131 / KCTC 12085) (Rhodobacter sphaeroides), this protein is Large ribosomal subunit protein uL11.